We begin with the raw amino-acid sequence, 196 residues long: Segregation and condensation protein B (196 aa).

This sequence belongs to the ScpB family. As to quaternary structure, homodimer. Homodimerization may be required to stabilize the binding of ScpA to the Smc head domains. Component of a cohesin-like complex composed of ScpA, ScpB and the Smc homodimer, in which ScpA and ScpB bind to the head domain of Smc. The presence of the three proteins is required for the association of the complex with DNA.

Its subcellular location is the cytoplasm. Participates in chromosomal partition during cell division. May act via the formation of a condensin-like complex containing Smc and ScpA that pull DNA away from mid-cell into both cell halves. The protein is Segregation and condensation protein B of Pediococcus pentosaceus (strain ATCC 25745 / CCUG 21536 / LMG 10740 / 183-1w).